A 954-amino-acid polypeptide reads, in one-letter code: Isoleucine--tRNA ligase (954 aa).

A 'HIGH' region motif is present at residues 60-70 (PYANGALHMGH). E564 is an L-isoleucyl-5'-AMP binding site. A 'KMSKS' region motif is present at residues 605 to 609 (KMSKS). K608 is a binding site for ATP. Positions 923, 926, 943, and 946 each coordinate Zn(2+).

It belongs to the class-I aminoacyl-tRNA synthetase family. IleS type 1 subfamily. In terms of assembly, monomer. It depends on Zn(2+) as a cofactor.

Its subcellular location is the cytoplasm. The catalysed reaction is tRNA(Ile) + L-isoleucine + ATP = L-isoleucyl-tRNA(Ile) + AMP + diphosphate. In terms of biological role, catalyzes the attachment of isoleucine to tRNA(Ile). As IleRS can inadvertently accommodate and process structurally similar amino acids such as valine, to avoid such errors it has two additional distinct tRNA(Ile)-dependent editing activities. One activity is designated as 'pretransfer' editing and involves the hydrolysis of activated Val-AMP. The other activity is designated 'posttransfer' editing and involves deacylation of mischarged Val-tRNA(Ile). This chain is Isoleucine--tRNA ligase, found in Synechococcus sp. (strain ATCC 27144 / PCC 6301 / SAUG 1402/1) (Anacystis nidulans).